Reading from the N-terminus, the 126-residue chain is Transcription antitermination protein NusB (126 aa).

It belongs to the NusB family.

In terms of biological role, involved in transcription antitermination. Required for transcription of ribosomal RNA (rRNA) genes. Binds specifically to the boxA antiterminator sequence of the ribosomal RNA (rrn) operons. The protein is Transcription antitermination protein NusB of Oceanobacillus iheyensis (strain DSM 14371 / CIP 107618 / JCM 11309 / KCTC 3954 / HTE831).